We begin with the raw amino-acid sequence, 876 residues long: Leucine--tRNA ligase (876 aa).

Residues 42–52 carry the 'HIGH' region motif; it reads PYPSGKLHMGH. Residues 634–638 carry the 'KMSKS' region motif; the sequence is KMSKS. Residue Lys637 participates in ATP binding.

Belongs to the class-I aminoacyl-tRNA synthetase family.

The protein localises to the cytoplasm. It catalyses the reaction tRNA(Leu) + L-leucine + ATP = L-leucyl-tRNA(Leu) + AMP + diphosphate. This Neisseria meningitidis serogroup C / serotype 2a (strain ATCC 700532 / DSM 15464 / FAM18) protein is Leucine--tRNA ligase.